Consider the following 213-residue polypeptide: ATP synthase peripheral stalk subunit OSCP, mitochondrial (213 aa).

Residues 1-23 (MAAPAVSGVSQQVRYFGTSVVRP) constitute a mitochondrion transit peptide. The SIFI-degron signature appears at 5 to 23 (AVSGVSQQVRYFGTSVVRP). Lysine 54, lysine 60, lysine 70, and lysine 73 each carry N6-acetyllysine. Lysine 90 is modified (N6-succinyllysine). 2 positions are modified to N6-acetyllysine; alternate: lysine 158 and lysine 162. Residues lysine 158 and lysine 162 each carry the N6-succinyllysine; alternate modification. N6-acetyllysine is present on residues lysine 172, lysine 176, and lysine 192. At lysine 199 the chain carries N6-succinyllysine.

The protein belongs to the ATPase delta chain family. As to quaternary structure, component of the ATP synthase complex composed at least of ATP5F1A/subunit alpha, ATP5F1B/subunit beta, ATP5MC1/subunit c (homooctomer), MT-ATP6/subunit a, MT-ATP8/subunit 8, ATP5ME/subunit e, ATP5MF/subunit f, ATP5MG/subunit g, ATP5MK/subunit k, ATP5MJ/subunit j, ATP5F1C/subunit gamma, ATP5F1D/subunit delta, ATP5F1E/subunit epsilon, ATP5PF/subunit F6, ATP5PB/subunit b, ATP5PD/subunit d, ATP5PO/subunit OSCP. ATP synthase complex consists of a soluble F(1) head domain (subunits alpha(3) and beta(3)) - the catalytic core - and a membrane F(0) domain - the membrane proton channel (subunits c, a, 8, e, f, g, k and j). These two domains are linked by a central stalk (subunits gamma, delta, and epsilon) rotating inside the F1 region and a stationary peripheral stalk (subunits F6, b, d, and OSCP). Post-translationally, acetylation at Lys-162 decreases ATP production. Deacetylated by SIRT3. In response to mitochondrial stress, the precursor protein is ubiquitinated by the SIFI complex in the cytoplasm before mitochondrial import, leading to its degradation. Within the SIFI complex, UBR4 initiates ubiquitin chain that are further elongated or branched by KCMF1.

Its subcellular location is the mitochondrion. The protein localises to the mitochondrion inner membrane. Subunit OSCP, of the mitochondrial membrane ATP synthase complex (F(1)F(0) ATP synthase or Complex V) that produces ATP from ADP in the presence of a proton gradient across the membrane which is generated by electron transport complexes of the respiratory chain. ATP synthase complex consist of a soluble F(1) head domain - the catalytic core - and a membrane F(1) domain - the membrane proton channel. These two domains are linked by a central stalk rotating inside the F(1) region and a stationary peripheral stalk. During catalysis, ATP synthesis in the catalytic domain of F(1) is coupled via a rotary mechanism of the central stalk subunits to proton translocation. In vivo, can only synthesize ATP although its ATP hydrolase activity can be activated artificially in vitro. Part of the complex F(0) domain. Part of the complex F(0) domain and the peripheric stalk, which acts as a stator to hold the catalytic alpha(3)beta(3) subcomplex and subunit a/ATP6 static relative to the rotary elements. In Callithrix jacchus (White-tufted-ear marmoset), this protein is ATP synthase peripheral stalk subunit OSCP, mitochondrial.